Here is a 120-residue protein sequence, read N- to C-terminus: Large ribosomal subunit protein bL17 (120 aa).

The protein belongs to the bacterial ribosomal protein bL17 family. As to quaternary structure, part of the 50S ribosomal subunit. Contacts protein L32.

This chain is Large ribosomal subunit protein bL17, found in Halalkalibacterium halodurans (strain ATCC BAA-125 / DSM 18197 / FERM 7344 / JCM 9153 / C-125) (Bacillus halodurans).